A 230-amino-acid chain; its full sequence is Phosphoribosylaminoimidazole-succinocarboxamide synthase (230 aa).

It belongs to the SAICAR synthetase family.

The catalysed reaction is 5-amino-1-(5-phospho-D-ribosyl)imidazole-4-carboxylate + L-aspartate + ATP = (2S)-2-[5-amino-1-(5-phospho-beta-D-ribosyl)imidazole-4-carboxamido]succinate + ADP + phosphate + 2 H(+). Its pathway is purine metabolism; IMP biosynthesis via de novo pathway; 5-amino-1-(5-phospho-D-ribosyl)imidazole-4-carboxamide from 5-amino-1-(5-phospho-D-ribosyl)imidazole-4-carboxylate: step 1/2. The chain is Phosphoribosylaminoimidazole-succinocarboxamide synthase from Thermotoga petrophila (strain ATCC BAA-488 / DSM 13995 / JCM 10881 / RKU-1).